Here is a 2208-residue protein sequence, read N- to C-terminus: RNA-directed RNA polymerase L (2208 aa).

Positions 26–284 (KDALLSQVHP…LHQDSDTINC (259 aa)) are endonuclease. Residues glutamate 51, aspartate 89, and glutamate 102 each coordinate Mn(2+). Lysine 115 is a catalytic residue. A RdRp catalytic domain is found at 1171 to 1367 (CDMKMAVNNG…YLSSKLNKFV (197 aa)). Aspartate 1329 lines the Mg(2+) pocket.

This sequence belongs to the Bunyavirales RNA polymerase family. Homomultimer; the oligomeric structure is essential for the polymerase activity. Interacts with nucleoprotein N. Interacts with protein Z; this interaction inhibits viral transcription and replication, Z partially blocks the product exit tunnel for the releasing nascent RNA product. The cofactor is Mn(2+). It depends on Mg(2+) as a cofactor.

It is found in the virion. The protein localises to the host cytoplasm. The enzyme catalyses RNA(n) + a ribonucleoside 5'-triphosphate = RNA(n+1) + diphosphate. Functionally, RNA-dependent RNA polymerase, which is responsible for the replication and transcription of the viral RNA genome using antigenomic RNA as an intermediate. During transcription, synthesizes subgenomic RNAs and assures their capping by a cap-snatching mechanism, which involves the endonuclease activity cleaving the host capped pre-mRNAs. These short capped RNAs are then used as primers for viral transcription. The 3'-end of subgenomic mRNAs molecules are heterogeneous and not polyadenylated. The replicase function is to direct synthesis of antigenomic and genomic RNA which are encapsidated and non capped. As a consequence of the use of the same enzyme for both transcription and replication, these mechanisms need to be well coordinated. These processes may be regulated by proteins N and Z in a dose-dependent manner. Z protein inhibits the viral polymerase L und thus the viral transcription and RNA synthesis. The chain is RNA-directed RNA polymerase L from Homo sapiens (Human).